The sequence spans 121 residues: Large ribosomal subunit protein uL14c (121 aa).

This sequence belongs to the universal ribosomal protein uL14 family. In terms of assembly, part of the 50S ribosomal subunit.

It is found in the plastid. The protein resides in the chloroplast. Functionally, binds to 23S rRNA. The polypeptide is Large ribosomal subunit protein uL14c (Tetradesmus obliquus (Green alga)).